We begin with the raw amino-acid sequence, 860 residues long: Ribosome-releasing factor 2, mitochondrial (860 aa).

The 293-residue stretch at 45 to 337 folds into the tr-type G domain; that stretch reads DRTRNIGIIA…AVVNFLPSPL (293 aa). GTP-binding positions include 54–61, 118–122, and 172–175; these read AHIDAGKT, DTPGH, and NKMD.

The protein belongs to the TRAFAC class translation factor GTPase superfamily. Classic translation factor GTPase family. EF-G/EF-2 subfamily.

It is found in the mitochondrion. In terms of biological role, mitochondrial GTPase that mediates the disassembly of ribosomes from messenger RNA at the termination of mitochondrial protein biosynthesis. Not involved in the GTP-dependent ribosomal translocation step during translation elongation. This is Ribosome-releasing factor 2, mitochondrial from Debaryomyces hansenii (strain ATCC 36239 / CBS 767 / BCRC 21394 / JCM 1990 / NBRC 0083 / IGC 2968) (Yeast).